The chain runs to 506 residues: Probable cytosol aminopeptidase (506 aa).

Lys-270 and Asp-275 together coordinate Mn(2+). Lys-282 is an active-site residue. Positions 293, 352, and 354 each coordinate Mn(2+). The active site involves Arg-356.

Belongs to the peptidase M17 family. Mn(2+) is required as a cofactor.

It localises to the cytoplasm. The catalysed reaction is Release of an N-terminal amino acid, Xaa-|-Yaa-, in which Xaa is preferably Leu, but may be other amino acids including Pro although not Arg or Lys, and Yaa may be Pro. Amino acid amides and methyl esters are also readily hydrolyzed, but rates on arylamides are exceedingly low.. It carries out the reaction Release of an N-terminal amino acid, preferentially leucine, but not glutamic or aspartic acids.. Functionally, presumably involved in the processing and regular turnover of intracellular proteins. Catalyzes the removal of unsubstituted N-terminal amino acids from various peptides. This Photorhabdus laumondii subsp. laumondii (strain DSM 15139 / CIP 105565 / TT01) (Photorhabdus luminescens subsp. laumondii) protein is Probable cytosol aminopeptidase.